Consider the following 321-residue polypeptide: Fructose-1,6-bisphosphatase class 1 (321 aa).

Mg(2+)-binding residues include E93, D114, L116, and D117. Substrate-binding positions include 117–120 (DGSS), N205, Y233, and K263. Position 269 (E269) interacts with Mg(2+).

It belongs to the FBPase class 1 family. Homotetramer. Mg(2+) is required as a cofactor.

It localises to the cytoplasm. The enzyme catalyses beta-D-fructose 1,6-bisphosphate + H2O = beta-D-fructose 6-phosphate + phosphate. Its pathway is carbohydrate biosynthesis; gluconeogenesis. The sequence is that of Fructose-1,6-bisphosphatase class 1 from Persephonella marina (strain DSM 14350 / EX-H1).